We begin with the raw amino-acid sequence, 274 residues long: Nitrogenase iron protein (274 aa).

8 to 15 (GKGGIGKS) serves as a coordination point for ATP. Position 94 (cysteine 94) interacts with [4Fe-4S] cluster. An ADP-ribosylarginine; by dinitrogenase reductase ADP-ribosyltransferase modification is found at arginine 97. Cysteine 129 contributes to the [4Fe-4S] cluster binding site.

Belongs to the NifH/BchL/ChlL family. As to quaternary structure, homodimer. The cofactor is [4Fe-4S] cluster. The reversible ADP-ribosylation of Arg-97 inactivates the nitrogenase reductase and regulates nitrogenase activity.

It catalyses the reaction N2 + 8 reduced [2Fe-2S]-[ferredoxin] + 16 ATP + 16 H2O = H2 + 8 oxidized [2Fe-2S]-[ferredoxin] + 2 NH4(+) + 16 ADP + 16 phosphate + 6 H(+). In terms of biological role, the key enzymatic reactions in nitrogen fixation are catalyzed by the nitrogenase complex, which has 2 components: the iron protein and the molybdenum-iron protein. This chain is Nitrogenase iron protein, found in Methanocella arvoryzae (strain DSM 22066 / NBRC 105507 / MRE50).